Consider the following 129-residue polypeptide: Sulfurtransferase TusD (129 aa).

The active-site Cysteine persulfide intermediate is C79.

This sequence belongs to the DsrE/TusD family. Heterohexamer, formed by a dimer of trimers. The hexameric TusBCD complex contains 2 copies each of TusB, TusC and TusD. The TusBCD complex interacts with TusE.

It is found in the cytoplasm. Part of a sulfur-relay system required for 2-thiolation of 5-methylaminomethyl-2-thiouridine (mnm(5)s(2)U) at tRNA wobble positions. Accepts sulfur from TusA and transfers it in turn to TusE. The sequence is that of Sulfurtransferase TusD from Serratia proteamaculans (strain 568).